Here is a 769-residue protein sequence, read N- to C-terminus: Glutathione biosynthesis bifunctional protein GshAB (769 aa).

Residues 1–347 (MLDSFKEDPK…QLADENENNI (347 aa)) are glutamate--cysteine ligase. The ATP-grasp domain occupies 514-768 (KLVLAEHDIR…IGDKILDFLF (255 aa)). 541–599 (SLFEDKQIVVKPKSTNYGWGISIFKNKFTLEDYQEALNIAFSYDSSVIIEEFIPGDEFR) is an ATP binding site. Residues Asp-721, Glu-738, and Asn-740 each contribute to the Mg(2+) site. Residues Asp-721, Glu-738, and Asn-740 each coordinate Mn(2+).

The protein in the N-terminal section; belongs to the glutamate--cysteine ligase type 1 family. Type 2 subfamily. As to quaternary structure, monomer. The cofactor is Mg(2+). It depends on Mn(2+) as a cofactor.

It carries out the reaction L-cysteine + L-glutamate + ATP = gamma-L-glutamyl-L-cysteine + ADP + phosphate + H(+). The enzyme catalyses gamma-L-glutamyl-L-cysteine + glycine + ATP = glutathione + ADP + phosphate + H(+). The protein operates within sulfur metabolism; glutathione biosynthesis; glutathione from L-cysteine and L-glutamate: step 1/2. It participates in sulfur metabolism; glutathione biosynthesis; glutathione from L-cysteine and L-glutamate: step 2/2. Its function is as follows. Synthesizes glutathione from L-glutamate and L-cysteine via gamma-L-glutamyl-L-cysteine. The sequence is that of Glutathione biosynthesis bifunctional protein GshAB from Listeria monocytogenes serotype 4b (strain F2365).